The following is a 993-amino-acid chain: Ephrin type-A receptor 7 (993 aa).

The first 27 residues, 1 to 27 (MVLRSRLPPWIMLCSVWLLRFAHTGEA), serve as a signal peptide directing secretion. Residues 28-550 (QAAKEVILLD…TAVSSEQNPV (523 aa)) are Extracellular-facing. The Eph LBD domain occupies 32–210 (EVILLDSKAQ…YYKKCWSIIE (179 aa)). Fibronectin type-III domains are found at residues 331–441 (PPSA…TGQA) and 442–537 (APSQ…TLEE). N-linked (GlcNAc...) asparagine glycans are attached at residues N343 and N410. Residues 551–571 (IIIAVVAVAGTIILVFMVFGF) form a helical membrane-spanning segment. Residues 572–993 (IIGRRHCGYS…LHLHGTGIQV (422 aa)) lie on the Cytoplasmic side of the membrane. A phosphotyrosine; by autocatalysis mark is found at Y603 and Y609. The Protein kinase domain maps to 628–889 (IKIERVIGAG…QIVGILDKMI (262 aa)). ATP contacts are provided by residues 634–642 (IGAGEFGEV) and K660. The active-site Proton acceptor is D753. Y786 and Y935 each carry phosphotyrosine; by autocatalysis. The SAM domain occupies 918 to 982 (TTFCSVGEWL…MSSIQTMRAQ (65 aa)). Positions 991–993 (IQV) match the PDZ-binding motif.

Belongs to the protein kinase superfamily. Tyr protein kinase family. Ephrin receptor subfamily. As to quaternary structure, heterotetramer upon binding of the ligand. The heterotetramer is composed of an ephrin dimer and a receptor dimer. Oligomerization is probably required to induce biological responses. Phosphorylated.

The protein localises to the cell membrane. The enzyme catalyses L-tyrosyl-[protein] + ATP = O-phospho-L-tyrosyl-[protein] + ADP + H(+). Its function is as follows. Receptor tyrosine kinase which binds promiscuously GPI-anchored ephrin-A family ligands residing on adjacent cells, leading to contact-dependent bidirectional signaling into neighboring cells. The signaling pathway downstream of the receptor is referred to as forward signaling while the signaling pathway downstream of the ephrin ligand is referred to as reverse signaling. Among GPI-anchored ephrin-A ligands, EFNA5 is a cognate/functional ligand for EPHA7 and their interaction regulates brain development modulating cell-cell adhesion and repulsion. Has a repellent activity on axons and is for instance involved in the guidance of corticothalamic axons and in the proper topographic mapping of retinal axons to the colliculus. May also regulate brain development through a caspase(CASP3)-dependent proapoptotic activity. Forward signaling may result in activation of components of the ERK signaling pathway including MAP2K1, MAP2K2, MAPK1 and MAPK3 which are phosphorylated upon activation of EPHA7. This Gallus gallus (Chicken) protein is Ephrin type-A receptor 7 (EPHA7).